The primary structure comprises 430 residues: Dihydroorotase (430 aa).

Zn(2+) contacts are provided by histidine 60 and histidine 62. Substrate is bound by residues 62 to 64 and asparagine 94; that span reads HFR. Residues aspartate 151, histidine 178, and histidine 231 each contribute to the Zn(2+) site. Asparagine 277 is a substrate binding site. A Zn(2+)-binding site is contributed by aspartate 304. Aspartate 304 is an active-site residue. Substrate is bound by residues histidine 308 and 322-323; that span reads FG.

The protein belongs to the metallo-dependent hydrolases superfamily. DHOase family. Class I DHOase subfamily. The cofactor is Zn(2+).

It catalyses the reaction (S)-dihydroorotate + H2O = N-carbamoyl-L-aspartate + H(+). Its pathway is pyrimidine metabolism; UMP biosynthesis via de novo pathway; (S)-dihydroorotate from bicarbonate: step 3/3. Functionally, catalyzes the reversible cyclization of carbamoyl aspartate to dihydroorotate. This Carboxydothermus hydrogenoformans (strain ATCC BAA-161 / DSM 6008 / Z-2901) protein is Dihydroorotase.